The chain runs to 138 residues: Basic phospholipase A2 canebraxin B (138 aa).

Residues Met1 to Gly16 form the signal peptide. 7 disulfides stabilise this stretch: Cys42–Cys131, Cys44–Cys60, Cys59–Cys111, Cys65–Cys138, Cys66–Cys104, Cys73–Cys97, and Cys91–Cys102. Residues Tyr43, Gly45, and Gly47 each coordinate Ca(2+). His63 is a catalytic residue. Asp64 contributes to the Ca(2+) binding site. Residue Asp105 is part of the active site.

This sequence belongs to the phospholipase A2 family. Group II subfamily. Heterodimer of an acidic subunit and a basic chain. The acidic subunit is non-toxic, without enzymatic activity and comprises 3 peptides that are cross-linked by 7 disulfide bridges. The basic subunit is toxic, has phospholipase A2 activity and is composed of a single chain. Ca(2+) serves as cofactor. As to expression, expressed by the venom gland.

The protein resides in the secreted. The catalysed reaction is a 1,2-diacyl-sn-glycero-3-phosphocholine + H2O = a 1-acyl-sn-glycero-3-phosphocholine + a fatty acid + H(+). Snake venom phospholipase A2 (PLA2) that shows presynaptic neurotoxicity. PLA2 catalyzes the calcium-dependent hydrolysis of the 2-acyl groups in 3-sn-phosphoglycerides. This Crotalus horridus (Timber rattlesnake) protein is Basic phospholipase A2 canebraxin B.